The primary structure comprises 469 residues: 3-isopropylmalate dehydratase large subunit (469 aa).

Residues Cys-350, Cys-410, and Cys-413 each coordinate [4Fe-4S] cluster.

This sequence belongs to the aconitase/IPM isomerase family. LeuC type 1 subfamily. In terms of assembly, heterodimer of LeuC and LeuD. The cofactor is [4Fe-4S] cluster.

It catalyses the reaction (2R,3S)-3-isopropylmalate = (2S)-2-isopropylmalate. It functions in the pathway amino-acid biosynthesis; L-leucine biosynthesis; L-leucine from 3-methyl-2-oxobutanoate: step 2/4. Catalyzes the isomerization between 2-isopropylmalate and 3-isopropylmalate, via the formation of 2-isopropylmaleate. This is 3-isopropylmalate dehydratase large subunit from Rhizobium etli (strain CIAT 652).